A 256-amino-acid polypeptide reads, in one-letter code: L-rhamnose 1-dehydrogenase (NAD(P)(+)) (256 aa).

NADP(+)-binding residues include Gly-12, Ser-14, Arg-15, Ile-17, Ser-37, Asp-66, Ala-67, and Asn-93. The active-site Proton donor is the Ser-146. Beta-L-rhamnose contacts are provided by Ser-146, Ser-148, Gln-156, and Tyr-159. NADP(+) contacts are provided by Tyr-159 and Lys-163. The Proton acceptor role is filled by Tyr-159. Catalysis depends on Lys-163, which acts as the Lowers pKa of active site Tyr. Thr-191 is a binding site for beta-L-rhamnose. Ile-192 lines the NADP(+) pocket. Asn-197 serves as a coordination point for beta-L-rhamnose.

Belongs to the short-chain dehydrogenases/reductases (SDR) family.

It catalyses the reaction L-rhamnofuranose + NAD(+) = L-rhamnono-1,4-lactone + NADH + H(+). The catalysed reaction is L-rhamnofuranose + NADP(+) = L-rhamnono-1,4-lactone + NADPH + H(+). The protein operates within carbohydrate degradation; L-rhamnose degradation. In terms of biological role, NAD(P)-dependent dehydrogenase that catalyzes the oxidation of L-rhamnose to L-rhamnono-1,4-lactone. Also shows high activity with L-lyxose and low activity with L-mannose and L-fucose. Can utilize either NAD(+) or NADP(+), with a strong preference for NADP(+). Catalyzes the first step in an alternative pathway for rhamnose utilization that does not involve phosphorylated intermediates. This Azotobacter vinelandii (strain DJ / ATCC BAA-1303) protein is L-rhamnose 1-dehydrogenase (NAD(P)(+)).